The following is a 105-amino-acid chain: Small ribosomal subunit protein uS10 (105 aa).

The protein belongs to the universal ribosomal protein uS10 family. In terms of assembly, part of the 30S ribosomal subunit.

Involved in the binding of tRNA to the ribosomes. The polypeptide is Small ribosomal subunit protein uS10 (Rickettsia peacockii (strain Rustic)).